A 216-amino-acid chain; its full sequence is MRINTVLFDLDGTLINTNELIISSFLHTLNTYYPNQYKREDVLPFIGPSLHDTFSKIDENKVEEMITSYRKFNHDHHDELVEEYETVYETVRELKRQGYKVGIVTTKARQTVEMGLQLSKLDEFFDVVVTIDDVENVKPHPEPLQKALELLDAKPEEALMVGDNHHDIVGGQNAGTKTAAVSWTLKGRAYLEAYKPDFMLDKMSDLLPILSNMNRS.

Asp-9 (nucleophile) is an active-site residue.

This sequence belongs to the HAD-like hydrolase superfamily. PpaX family. The cofactor is Mg(2+).

It catalyses the reaction diphosphate + H2O = 2 phosphate + H(+). Its function is as follows. Hydrolyzes pyrophosphate formed during P-Ser-HPr dephosphorylation by HPrK/P. Might play a role in controlling the intracellular pyrophosphate pool. This chain is Pyrophosphatase PpaX, found in Bacillus cereus (strain B4264).